Here is a 151-residue protein sequence, read N- to C-terminus: MHSLQAKILDPRLGSDYPLPAYATAGSAGLDLRAMLQEELTLEPGQTALIPTGLAIHIADPGLAALVLPRSGLGHKHGIVLGNLVGLIDSDYQGELMISCWNRGQSTFRIAVGERIAQLVLVPVMQAHFQLVESFDESQRGAGGFGHSGSH.

Residues 70 to 72, asparagine 83, 87 to 89, and methionine 97 each bind substrate; these read RSG and LID.

It belongs to the dUTPase family. Mg(2+) is required as a cofactor.

The catalysed reaction is dUTP + H2O = dUMP + diphosphate + H(+). Its pathway is pyrimidine metabolism; dUMP biosynthesis; dUMP from dCTP (dUTP route): step 2/2. This enzyme is involved in nucleotide metabolism: it produces dUMP, the immediate precursor of thymidine nucleotides and it decreases the intracellular concentration of dUTP so that uracil cannot be incorporated into DNA. The protein is Deoxyuridine 5'-triphosphate nucleotidohydrolase of Azotobacter vinelandii (strain DJ / ATCC BAA-1303).